We begin with the raw amino-acid sequence, 525 residues long: Serine/threonine protein phosphatase 2A 55 kDa regulatory subunit B beta isoform (525 aa).

A disordered region spans residues 1–31; that stretch reads MDPFSKSPDDDDLRPEAEAARRPQPQPQPRE. WD repeat units follow at residues 48–87 and 124–165; these read QEVDIISAIEFDKSGDHLATGDRGGRVVLFERTDSRDSAS and EIEE…VKRI. The segment at 169–191 is disordered; the sequence is NLNTSQSSGNGTTSSSSSSSSRA. The span at 171–189 shows a compositional bias: low complexity; the sequence is NTSQSSGNGTTSSSSSSSS. WD repeat units follow at residues 244–282, 293–333, 352–390, and 495–525; these read AHDYHINSISNNSDGETYISADDLRINLWNLEISNQSFN, DLTE…LCDN, EIIASVSDIKFARDGRHILSRDYMTLKLWDINMDSGPVA, and DLSTKLLHLAWHPTENSIACAAANSLYMYYA.

This sequence belongs to the phosphatase 2A regulatory subunit B family. In terms of assembly, PP2A consists of a common heteromeric enzyme, composed of a catalytic subunit (subunits C), a constant regulatory subunit (subunit A), and a variety of regulatory subunits such as subunits B (the R2/B/PR55/B55, R3/B''/PR72/PR130/PR59 and R5/B'/B56 families).

The B regulatory subunit may modulate substrate selectivity and catalytic activity, and may also direct the localization of the catalytic enzyme to a particular subcellular compartment. This Oryza sativa subsp. indica (Rice) protein is Serine/threonine protein phosphatase 2A 55 kDa regulatory subunit B beta isoform.